Reading from the N-terminus, the 527-residue chain is FHA domain-containing protein FhaA (527 aa).

At threonine 116 the chain carries Phosphothreonine. Positions 119-426 (FRARGTVNPD…APGGYSGYGQ (308 aa)) are disordered. Residues 170-188 (RPDEYYDDRYARPQEDPRG) are compositionally biased toward basic and acidic residues. Composition is skewed to low complexity over residues 199-209 (RGGYPPETGGY) and 256-266 (YQDQGRGYPDQ). Over residues 271 to 283 (YPPPYEQRPPVSP) the composition is skewed to pro residues. Residues 284 to 299 (GPAAGYGAPGYDQGYR) show a composition bias toward low complexity. Over residues 300 to 322 (QSGGYGPSPGGGQPGYGGYGEYG) the composition is skewed to gly residues. A compositionally biased stretch (low complexity) spans 345–366 (RPAYPDQGGYDQGYQQGATTYG). The FHA domain occupies 455-504 (NIIGRGQDAQFRLPDTGVSRRHLEIRWDGQVALLADLNSTNGTTVNNAPV).

Interacts with (phosphorylated) MviN and (phosphorylated) PknB via the FHA domain. Binds to the PknB juxtamembrane domain with an affinity that is modulated by the degree and the pattern of phosphorylation of this juxtamembrane domain. Phosphorylated by PknB.

It is found in the cytoplasm. In terms of biological role, regulates cell growth and peptidoglycan synthesis by binding to MviN. May inhibit the late stages of peptidoglycan synthesis. The chain is FHA domain-containing protein FhaA (fhaA) from Mycobacterium tuberculosis (strain ATCC 25618 / H37Rv).